A 170-amino-acid polypeptide reads, in one-letter code: Acetyl-CoA decarbonylase/synthase complex subunit epsilon 1 (170 aa).

Belongs to the CdhB family. As to quaternary structure, heterotetramer of two alpha and two epsilon subunits. The ACDS complex is made up of alpha, epsilon, beta, gamma and delta subunits with a probable stoichiometry of (alpha(2)epsilon(2))(4)-beta(8)-(gamma(1)delta(1))(8).

The protein operates within one-carbon metabolism; methanogenesis from acetate. Its function is as follows. Part of a complex that catalyzes the reversible cleavage of acetyl-CoA, allowing growth on acetate as sole source of carbon and energy. The alpha-epsilon subcomponent functions as a carbon monoxide dehydrogenase. The precise role of the epsilon subunit is unclear; it may have a stabilizing role within the alpha(2)epsilon(2) component and/or be involved in electron transfer to FAD during a potential FAD-mediated CO oxidation. The protein is Acetyl-CoA decarbonylase/synthase complex subunit epsilon 1 (cdhB1) of Methanosarcina mazei (strain ATCC BAA-159 / DSM 3647 / Goe1 / Go1 / JCM 11833 / OCM 88) (Methanosarcina frisia).